Consider the following 751-residue polypeptide: MEGIKLNLCLLCIFTCDILGFSNGNIYNAHGSAYAGASAGAYKTLPNAYPYGTKHGPVYKPVKTSYHPTNSYPPTYGSKTNYLPLAKKLSSYKPIKTTYNAKTNYPPVYKPKMTYPPTYKPKPSYPPTYKPKPSYPATYKSKSSYPSSYKPKKTYPPTYKPKLTYPPTYKPKPSYPPTYKPKPSYPATYKSKSSYPPSYKTKKTYPSSYKPKKTYPSTYKPKVSYPPTYKSKKSYPPIYKTKASYPSSYKPKKTYPSTYKPKISYPPTYKAKPSYPTSYRAKPSYPSTYKAKPSYPPTYKAKPSYPPTYKAKPTYPSTYKAKPSYPPTYKAKPSYPPTYKAKPSYPPSYKPKTTYPPSYKPKISYPPTYKAKPSYPPIYKAKPSYPPTYKAKPSYLPTYKAKPSYPPTYKAKPRYPTTYKAKPSYPPTYKAKPSYPPTYKAKLSYPPTYKAKPSYPPTYKAKPSYPPTYKAKPSYPPTYKTKPSYPRTYKAKPSYSSTYKAKPSYPPTYKAKPSYPPTYKAKPSYPPTYKAKPSYPPTYKAKPSYPPTYKAKPSYPQTYKAKSSYPPTYKAKPSYPPTYKAKPSYPPTYKAKPSYPPTYKAKPSYPPTYKAKPSYPPTYKAKPSYPPTYKAKPSYPPTYKAKPSYPPTYKAKPSYPATYPSTYKAKPSYPPTYKAKPSYPPTYKPKPSYPPTYKSKSSYPSSYKPKKTYPPTYKPKLTYPPIYKPKPSYPPTYKSSYPPRYKKKISYPSQY.

The signal sequence occupies residues Met1–Gly20. The tract at residues Phe21–Ala41 is nonrepetitive linker. 55 consecutive repeat copies span residues Tyr109–Thr118, Tyr119–Thr128, Tyr129–Thr138, Tyr139–Ser148, Tyr149–Thr158, Tyr159–Thr168, Tyr169–Thr178, Tyr179–Thr188, Tyr189–Ser198, Tyr199–Ser208, Tyr209–Thr218, Tyr219–Thr228, Tyr229–Ile238, Tyr239–Ser248, Tyr249–Thr258, Tyr259–Thr268, Tyr269–Ser278, Tyr279–Thr288, Tyr289–Thr298, Tyr299–Thr308, Tyr309–Thr318, Tyr319–Thr328, Tyr329–Thr338, Tyr339–Ser348, Tyr349–Ser358, Tyr359–Thr368, Tyr369–Ile378, Tyr379–Thr388, Tyr389–Thr398, Tyr399–Thr408, Tyr409–Thr418, Tyr419–Thr428, Tyr429–Thr438, Tyr439–Thr448, Tyr449–Thr458, Tyr459–Thr468, Tyr469–Thr478, Tyr479–Thr488, Tyr489–Thr498, Tyr499–Thr508, Tyr509–Thr518, Tyr519–Thr528, Tyr529–Thr538, Tyr539–Thr548, Tyr549–Thr558, Tyr559–Thr568, Tyr569–Thr578, Tyr579–Thr588, Tyr589–Thr598, Tyr599–Thr608, Tyr609–Thr618, Tyr619–Thr628, Tyr629–Thr638, Tyr639–Thr648, and Tyr649–Thr658. The segment at Tyr109 to Thr732 is 63 X 10 AA tandem repeats of Y-[KR]-[APTS]-K-[KPMSLTIVA]-[STR]-Y-[PLS]-[PASRQT]-[STI]. Residues Thr158 to Pro167 are compositionally biased toward low complexity. A disordered region spans residues Thr158–Tyr359. The span at Thr168–Ser184 shows a compositional bias: pro residues. Low complexity predominate over residues Tyr185–Lys262. Composition is skewed to low complexity over residues Thr288–Pro343 and Lys350–Tyr359. The interval Pro397 to Pro636 is disordered. The segment covering Ser444–Pro486 has biased composition (low complexity). Residues Tyr659–Thr662 form a 56; truncated repeat. Residues Pro660–Tyr751 are disordered. Over residues Thr662–Pro677 the composition is skewed to low complexity. 7 consecutive repeat copies span residues Tyr663–Thr672, Tyr673–Thr682, Tyr683–Thr692, Tyr693–Ser702, Tyr703–Thr712, Tyr713–Ile722, and Tyr723–Thr732. Residues Ser678–Pro690 are compositionally biased toward pro residues. Over residues Pro691–Pro721 the composition is skewed to low complexity.

Hydroxylated on proline (mono- or dihydroxylation) and tyrosine residues (to L-DOPA = 3',4'-dihydroxyphenylalanine) of the tandem repeats. In terms of tissue distribution, produced by the byssal gland.

The protein localises to the secreted. Provides adhesiveness to the mussel's foot. Mussels produce one of the strongest water insoluble glues. The mussel's adhesive is a bundle of threads, called a byssus, formed by a fibrous collagenous core coated with adhesive proteins. The chain is Adhesive plaque matrix protein (FP1) from Mytilus galloprovincialis (Mediterranean mussel).